The primary structure comprises 310 residues: Nucleotide-binding protein MAP_1147 (310 aa).

ATP is bound at residue 30 to 37 (GLSGAGRG). Residue 81-84 (DVRS) coordinates GTP.

It belongs to the RapZ-like family.

Its function is as follows. Displays ATPase and GTPase activities. This is Nucleotide-binding protein MAP_1147 from Mycolicibacterium paratuberculosis (strain ATCC BAA-968 / K-10) (Mycobacterium paratuberculosis).